Consider the following 226-residue polypeptide: Flagellar L-ring protein (226 aa).

A signal peptide spans 1–15 (MRILGLSAALLILGG). A lipid anchor (N-palmitoyl cysteine) is attached at Cys16. A lipid anchor (S-diacylglycerol cysteine) is attached at Cys16.

The protein belongs to the FlgH family. As to quaternary structure, the basal body constitutes a major portion of the flagellar organelle and consists of four rings (L,P,S, and M) mounted on a central rod.

Its subcellular location is the cell outer membrane. The protein resides in the bacterial flagellum basal body. In terms of biological role, assembles around the rod to form the L-ring and probably protects the motor/basal body from shearing forces during rotation. In Alteromonas mediterranea (strain DSM 17117 / CIP 110805 / LMG 28347 / Deep ecotype), this protein is Flagellar L-ring protein.